Here is a 556-residue protein sequence, read N- to C-terminus: Urocanate hydratase (556 aa).

NAD(+) contacts are provided by residues 52-53 (GG), Gln130, 176-178 (GMG), Glu196, Arg201, 242-243 (NA), 263-267 (QTSAH), 273-274 (YL), and Tyr322. Cys410 is an active-site residue. Position 492 (Gly492) interacts with NAD(+).

It belongs to the urocanase family. It depends on NAD(+) as a cofactor.

The protein localises to the cytoplasm. The catalysed reaction is 4-imidazolone-5-propanoate = trans-urocanate + H2O. It functions in the pathway amino-acid degradation; L-histidine degradation into L-glutamate; N-formimidoyl-L-glutamate from L-histidine: step 2/3. Functionally, catalyzes the conversion of urocanate to 4-imidazolone-5-propionate. The sequence is that of Urocanate hydratase from Shewanella woodyi (strain ATCC 51908 / MS32).